Here is a 578-residue protein sequence, read N- to C-terminus: Transcriptional regulator SKO1 (578 aa).

Positions Asn-39–Thr-50 are enriched in polar residues. 4 disordered regions span residues Asn-39–Pro-169, Met-176–Leu-195, Leu-287–Pro-311, and Glu-342–Phe-489. Residues Ser-51–Asn-62 show a composition bias toward low complexity. Composition is skewed to polar residues over residues Asn-70–Val-80 and Gly-107–Ser-132. Over residues Pro-154–Pro-169 the composition is skewed to low complexity. A compositionally biased stretch (polar residues) spans Leu-184–Ser-193. 2 stretches are compositionally biased toward low complexity: residues Leu-287–Leu-296 and Asp-356–Ala-370. A compositionally biased stretch (basic residues) spans Lys-384–Gly-402. Residues Lys-415–Leu-443 show a composition bias toward basic and acidic residues. Positions Asn-445–Lys-471 are enriched in low complexity. The 64-residue stretch at Asp-483 to Gln-546 folds into the bZIP domain. The tract at residues Lys-485–Lys-505 is basic motif. The tract at residues Ile-508–Leu-515 is leucine-zipper.

This sequence belongs to the bZIP family. Post-translationally, undergoes HOG1-dependent phosphorylation after osmotic stress.

The protein resides in the nucleus. Its function is as follows. Transcription repressor involved in cell wall damage response. Regulates 79 caspofungin-responsive genes, including several cell wall biogenesis genes such as CRH11, MNN2, and SKN1. Also controls the expression of pathogenesis and hyphal related genes and represses the yeast-to-hypha transition. Mediates the response to oxidative stress. In Candida albicans (strain SC5314 / ATCC MYA-2876) (Yeast), this protein is Transcriptional regulator SKO1 (SKO1).